The primary structure comprises 200 residues: Transcription elongation factor A protein-like 5 (200 aa).

5 stretches are compositionally biased toward basic and acidic residues: residues 1–49 (MEKF…KLEV), 61–85 (GEGKPEKQGKSDGEGKRQGESKPDS), 94–106 (RAAEKRPAEDYVP), 114–153 (DRGTDDSPKNSQEDLQDRHVSSEEMMRECADMTRAQEELR), and 190–200 (GQKDLEDAPFV). Positions 1–200 (MEKFYKENEG…QKDLEDAPFV (200 aa)) are disordered.

Belongs to the TFS-II family. TFA subfamily.

It localises to the nucleus. In terms of biological role, may be involved in transcriptional regulation. This Mus musculus (Mouse) protein is Transcription elongation factor A protein-like 5 (Tceal5).